The sequence spans 208 residues: Imidazoleglycerol-phosphate dehydratase (208 aa).

The protein belongs to the imidazoleglycerol-phosphate dehydratase family.

The protein localises to the cytoplasm. The enzyme catalyses D-erythro-1-(imidazol-4-yl)glycerol 3-phosphate = 3-(imidazol-4-yl)-2-oxopropyl phosphate + H2O. Its pathway is amino-acid biosynthesis; L-histidine biosynthesis; L-histidine from 5-phospho-alpha-D-ribose 1-diphosphate: step 6/9. The polypeptide is Imidazoleglycerol-phosphate dehydratase (Hyphomonas neptunium (strain ATCC 15444)).